A 91-amino-acid chain; its full sequence is Small ribosomal subunit protein uS17 (91 aa).

Belongs to the universal ribosomal protein uS17 family. Part of the 30S ribosomal subunit.

Its function is as follows. One of the primary rRNA binding proteins, it binds specifically to the 5'-end of 16S ribosomal RNA. The chain is Small ribosomal subunit protein uS17 from Saccharopolyspora erythraea (strain ATCC 11635 / DSM 40517 / JCM 4748 / NBRC 13426 / NCIMB 8594 / NRRL 2338).